The primary structure comprises 366 residues: Galactoside alpha-(1,2)-fucosyltransferase 1 (366 aa).

The Cytoplasmic segment spans residues 1 to 8 (MWPLSHRH). Residues 9–25 (LCLAFLLVCVLSAISFF) form a helical; Signal-anchor for type II membrane protein membrane-spanning segment. Residues 26-366 (LHVHQDSFRH…LSPLWTLAEP (341 aa)) are Lumenal-facing. Asn66, Asn302, and Asn328 each carry an N-linked (GlcNAc...) asparagine glycan.

The protein belongs to the glycosyltransferase 11 family.

The protein resides in the golgi apparatus. The protein localises to the golgi stack membrane. It catalyses the reaction a beta-D-galactosyl-(1-&gt;4)-N-acetyl-beta-D-glucosaminyl derivative + GDP-beta-L-fucose = an alpha-L-Fuc-(1-&gt;2)-beta-D-Gal-(1-&gt;4)-beta-D-GlcNAc derivative + GDP + H(+). It carries out the reaction a ganglioside GA1 + GDP-beta-L-fucose = a ganglioside Fuc-GA1 + GDP + H(+). The catalysed reaction is a beta-D-Gal-(1-&gt;3)-beta-D-GlcNAc-(1-&gt;3)-beta-D-Gal-(1-&gt;4)-beta-D-Glc-(1&lt;-&gt;1')-Cer(d18:1(4E)) + GDP-beta-L-fucose = alpha-L-fucosyl-(1-&gt;2)- beta-D-galactosyl-(1-&gt;3)-N-acetyl-beta-D-glucosaminyl-(1-&gt;3)-beta-D-galactosyl-(1-&gt;4)-beta-D-glucosyl-(1&lt;-&gt;1')-N-acylsphing-4-enine + GDP + H(+). The enzyme catalyses a neolactoside nLc4Cer(d18:1(4E)) + GDP-beta-L-fucose = a neolactoside IV(2)-alpha-Fuc-nLc4Cer(d18:1(4E)) + GDP + H(+). It catalyses the reaction a ganglioside GM1 + GDP-beta-L-fucose = a ganglioside Fuc-GM1 + GDP + H(+). It carries out the reaction beta-D-galactosyl-(1-&gt;3)-N-acetyl-D-galactosamine + GDP-beta-L-fucose = alpha-L-fucosyl-(1-&gt;2)-beta-D-galactosyl-(1-&gt;3)-N-acetyl-D-galactosamine + GDP + H(+). Its pathway is protein modification; protein glycosylation. In terms of biological role, catalyzes the transfer of L-fucose, from a guanosine diphosphate-beta-L-fucose, to the terminal galactose residue of glycoconjugates through an alpha(1,2) linkage leading to H antigen synthesis that is an intermediate substrate in the synthesis of ABO blood group antigens. H antigen is essential for maturation of the glomerular layer of the main olfactory bulb, in cell migration and early cell-cell contacts during tumor associated angiogenesis. Preferentially fucosylates soluble lactose and to a lesser extent fucosylates glycolipids gangliosides GA1 and GM1a. This is Galactoside alpha-(1,2)-fucosyltransferase 1 from Alouatta belzebul (Red-handed howler monkey).